A 190-amino-acid polypeptide reads, in one-letter code: Segregation and condensation protein B (190 aa).

The protein belongs to the ScpB family. Homodimer. Homodimerization may be required to stabilize the binding of ScpA to the Smc head domains. Component of a cohesin-like complex composed of ScpA, ScpB and the Smc homodimer, in which ScpA and ScpB bind to the head domain of Smc. The presence of the three proteins is required for the association of the complex with DNA.

The protein localises to the cytoplasm. Its function is as follows. Participates in chromosomal partition during cell division. May act via the formation of a condensin-like complex containing Smc and ScpA that pull DNA away from mid-cell into both cell halves. The sequence is that of Segregation and condensation protein B from Ruminiclostridium cellulolyticum (strain ATCC 35319 / DSM 5812 / JCM 6584 / H10) (Clostridium cellulolyticum).